The sequence spans 804 residues: uncharacterized protein (804 aa).

Transmembrane regions (helical) follow at residues 15 to 35 (LLIV…LGNI), 243 to 263 (FLLL…AVAM), 301 to 321 (LSAV…MVLL), 333 to 353 (SLWP…LVGL), 381 to 401 (FYLP…MGGS), 403 to 423 (LLWA…VLGW), 453 to 473 (TLSQ…LLVL), 680 to 700 (ALEV…LAQV), 734 to 754 (MLGF…LAVL), and 769 to 789 (LWIV…GWLG).

Belongs to the ABC-4 integral membrane protein family.

It localises to the cell membrane. This is an uncharacterized protein from Escherichia coli (strain K12).